A 319-amino-acid chain; its full sequence is Glycine--tRNA ligase alpha subunit (319 aa).

The interval 290-319 is disordered; it reads RQQQPEAPAPGPAAVVGGRDRKDACDVKEG. The segment covering 307–319 has biased composition (basic and acidic residues); it reads GRDRKDACDVKEG.

This sequence belongs to the class-II aminoacyl-tRNA synthetase family. As to quaternary structure, tetramer of two alpha and two beta subunits.

The protein resides in the cytoplasm. It carries out the reaction tRNA(Gly) + glycine + ATP = glycyl-tRNA(Gly) + AMP + diphosphate. The chain is Glycine--tRNA ligase alpha subunit from Moorella thermoacetica (strain ATCC 39073 / JCM 9320).